Consider the following 442-residue polypeptide: Cytochrome c biogenesis protein CcsB (442 aa).

The next 3 helical transmembrane spans lie at 17-37 (LRLA…GTVI), 76-96 (TPWY…CTLT), and 162-182 (LGPI…ILGA).

This sequence belongs to the Ccs1/CcsB family. In terms of assembly, may interact with CcsA.

It localises to the cellular thylakoid membrane. In terms of biological role, required during biogenesis of c-type cytochromes (cytochrome c6 and cytochrome f) at the step of heme attachment. The protein is Cytochrome c biogenesis protein CcsB of Thermosynechococcus vestitus (strain NIES-2133 / IAM M-273 / BP-1).